The primary structure comprises 338 residues: Ketol-acid reductoisomerase (NADP(+)) (338 aa).

A KARI N-terminal Rossmann domain is found at 1 to 181 (MNVFYDKDAD…GGGRAGIIET (181 aa)). NADP(+) is bound by residues 24–27 (YGSQ), Arg-47, and Ser-52. His-107 is an active-site residue. Position 133 (Gly-133) interacts with NADP(+). Residues 182–327 (NFREETETDL…AKLRAMMPWI (146 aa)) form the KARI C-terminal knotted domain. Positions 190, 194, 226, and 230 each coordinate Mg(2+). Ser-251 is a substrate binding site.

This sequence belongs to the ketol-acid reductoisomerase family. Requires Mg(2+) as cofactor.

It carries out the reaction (2R)-2,3-dihydroxy-3-methylbutanoate + NADP(+) = (2S)-2-acetolactate + NADPH + H(+). The enzyme catalyses (2R,3R)-2,3-dihydroxy-3-methylpentanoate + NADP(+) = (S)-2-ethyl-2-hydroxy-3-oxobutanoate + NADPH + H(+). It participates in amino-acid biosynthesis; L-isoleucine biosynthesis; L-isoleucine from 2-oxobutanoate: step 2/4. It functions in the pathway amino-acid biosynthesis; L-valine biosynthesis; L-valine from pyruvate: step 2/4. Functionally, involved in the biosynthesis of branched-chain amino acids (BCAA). Catalyzes an alkyl-migration followed by a ketol-acid reduction of (S)-2-acetolactate (S2AL) to yield (R)-2,3-dihydroxy-isovalerate. In the isomerase reaction, S2AL is rearranged via a Mg-dependent methyl migration to produce 3-hydroxy-3-methyl-2-ketobutyrate (HMKB). In the reductase reaction, this 2-ketoacid undergoes a metal-dependent reduction by NADPH to yield (R)-2,3-dihydroxy-isovalerate. The chain is Ketol-acid reductoisomerase (NADP(+)) from Burkholderia lata (strain ATCC 17760 / DSM 23089 / LMG 22485 / NCIMB 9086 / R18194 / 383).